Here is a 23-residue protein sequence, read N- to C-terminus: Laccase-1 (23 aa).

Belongs to the multicopper oxidase family. Requires Cu cation as cofactor.

Its subcellular location is the secreted. It carries out the reaction 4 hydroquinone + O2 = 4 benzosemiquinone + 2 H2O. With respect to regulation, strongly inhibited by sodium azide, sodium cyanide, Li(+), Sn(+), Hg(2+), and the disulfide-reducing agents beta-mercaptoethanol, dithiothreitol and thioglycolic acid. Moderately inhibited by Mn(2+) and Fe(2+), inhibition by these metal ions is stronger at 0.1 mM than at 1 mM. Moderately inhibited by Cu(2+). Functionally, lignin degradation and detoxification of lignin-derived products. Demethylates eucalyptus hard wood lignin. Has high activity against the non-phenolic heterocyclic compound ABTS, and lower activity against the phenolic substrates syringic acid, caffeic acid, syringaldazine, vanillic acid, catechol and levodihydroxyphenylalanine. The chain is Laccase-1 from Galerina sp.